Here is a 264-residue protein sequence, read N- to C-terminus: uncharacterized protein (264 aa).

Positions 3-243 (LQLDNVSLKR…QILSAFFDTP (241 aa)) constitute an ABC transporter domain. 35 to 42 (GLNGAGKT) is a binding site for ATP.

This sequence belongs to the ABC transporter superfamily.

This is an uncharacterized protein from Bacillus subtilis (strain 168).